Here is a 408-residue protein sequence, read N- to C-terminus: LL-diaminopimelate aminotransferase (408 aa).

Tyr-15 and Gly-42 together coordinate substrate. Residues Tyr-72, 108-109 (SK), Tyr-132, Asn-187, Tyr-218, and 246-248 (SFS) each bind pyridoxal 5'-phosphate. The substrate site is built by Lys-109, Tyr-132, and Asn-187. Lys-249 bears the N6-(pyridoxal phosphate)lysine mark. 2 residues coordinate pyridoxal 5'-phosphate: Arg-257 and Asn-292. Positions 292 and 388 each coordinate substrate.

The protein belongs to the class-I pyridoxal-phosphate-dependent aminotransferase family. LL-diaminopimelate aminotransferase subfamily. In terms of assembly, homodimer. The cofactor is pyridoxal 5'-phosphate.

It carries out the reaction (2S,6S)-2,6-diaminopimelate + 2-oxoglutarate = (S)-2,3,4,5-tetrahydrodipicolinate + L-glutamate + H2O + H(+). Its pathway is amino-acid biosynthesis; L-lysine biosynthesis via DAP pathway; LL-2,6-diaminopimelate from (S)-tetrahydrodipicolinate (aminotransferase route): step 1/1. Involved in the synthesis of meso-diaminopimelate (m-DAP or DL-DAP), required for both lysine and peptidoglycan biosynthesis. Catalyzes the direct conversion of tetrahydrodipicolinate to LL-diaminopimelate. In Prochlorococcus marinus (strain MIT 9301), this protein is LL-diaminopimelate aminotransferase.